The following is a 352-amino-acid chain: MTQNDSMAELKQQALVDINEAQNERELQDVKVKYLGKKGSVSGLMKNMKDLPNEEKPAYGQKVNELRQTIQKELDEKQELLKNEKLNQQLAEETIDVTLPSRQISIGSKHPLTRTVEEIEDLFLGLGYEIVDGYEVEQDYYNFEALNLPKSHPARDMQDSFYITDEILMRTHTSPVQARTMEKRNGQGPVKIICPGKVYRRDSDDATHSHQFTQIEGLVVDKNIKMSDLKGTLELVAKKLFGADREIRLRPSYFPFTEPSVEVDVSCFKCKGKGCNVCKHTGWIEILGAGMVHPNVLEMAGFDSNEYSGFAFGMGPDRIAMLKYGIEDIRYFYTNDVRFLEQFKAVEDRGEA.

E258 is a Mg(2+) binding site.

Belongs to the class-II aminoacyl-tRNA synthetase family. Phe-tRNA synthetase alpha subunit type 1 subfamily. Tetramer of two alpha and two beta subunits. It depends on Mg(2+) as a cofactor.

It is found in the cytoplasm. The enzyme catalyses tRNA(Phe) + L-phenylalanine + ATP = L-phenylalanyl-tRNA(Phe) + AMP + diphosphate + H(+). The protein is Phenylalanine--tRNA ligase alpha subunit of Staphylococcus haemolyticus (strain JCSC1435).